The sequence spans 374 residues: Cysteine-type anaerobic sulfatase-maturating enzyme (374 aa).

In terms of domain architecture, Radical SAM core spans 1 to 227 (MKSLSMLIKP…LNKLFDLWFK (227 aa)). Cys15 and Cys19 together coordinate [4Fe-4S] cluster. S-adenosyl-L-methionine is bound at residue Tyr21. [4Fe-4S] cluster is bound at residue Cys22. 4 residues coordinate S-adenosyl-L-methionine: Gly66, Ser122, Arg134, and Leu195. Cys255, Cys261, and Cys276 together coordinate [4Fe-4S] cluster. Residue Asp277 is the Proton acceptor of the active site. The [4Fe-4S] cluster site is built by Cys317, Cys320, Cys326, Cys330, and Cys348.

Belongs to the radical SAM superfamily. Anaerobic sulfatase-maturating enzyme family. [4Fe-4S] cluster is required as a cofactor.

The enzyme catalyses L-cysteinyl-[sulfatase] + S-adenosyl-L-methionine + H2O = 3-oxo-L-alanyl-[sulfatase] + hydrogen sulfide + 5'-deoxyadenosine + L-methionine + 2 H(+). Its pathway is protein modification; sulfatase oxidation. Functionally, involved in 'Cys-type' sulfatase maturation under anaerobic conditions. Catalyzes the post-translational modification of cysteine into 3-oxoalanine (also known as C(alpha)-formylglycine (FGly)), by a free radical chemical mechanism initiated via the reductive cleavage of S-adenosyl-L-methionine (SAM). This chain is Cysteine-type anaerobic sulfatase-maturating enzyme, found in Clostridium novyi (strain NT).